The following is a 188-amino-acid chain: Adenine phosphoribosyltransferase (188 aa).

It belongs to the purine/pyrimidine phosphoribosyltransferase family. Homodimer.

The protein resides in the cytoplasm. It carries out the reaction AMP + diphosphate = 5-phospho-alpha-D-ribose 1-diphosphate + adenine. It participates in purine metabolism; AMP biosynthesis via salvage pathway; AMP from adenine: step 1/1. Functionally, catalyzes a salvage reaction resulting in the formation of AMP, that is energically less costly than de novo synthesis. The chain is Adenine phosphoribosyltransferase from Frankia casuarinae (strain DSM 45818 / CECT 9043 / HFP020203 / CcI3).